Consider the following 367-residue polypeptide: Phosphoribosylaminoimidazole-succinocarboxamide synthase (367 aa).

Belongs to the SAICAR synthetase family.

It catalyses the reaction 5-amino-1-(5-phospho-D-ribosyl)imidazole-4-carboxylate + L-aspartate + ATP = (2S)-2-[5-amino-1-(5-phospho-beta-D-ribosyl)imidazole-4-carboxamido]succinate + ADP + phosphate + 2 H(+). It functions in the pathway purine metabolism; IMP biosynthesis via de novo pathway; 5-amino-1-(5-phospho-D-ribosyl)imidazole-4-carboxamide from 5-amino-1-(5-phospho-D-ribosyl)imidazole-4-carboxylate: step 1/2. This chain is Phosphoribosylaminoimidazole-succinocarboxamide synthase, found in Psychromonas ingrahamii (strain DSM 17664 / CCUG 51855 / 37).